The chain runs to 314 residues: Transcriptional regulatory protein GlnL (314 aa).

The Response regulatory domain maps to 2-118; that stretch reads RFFIADDDRA…EIVTVLQKVK (117 aa). Aspartate 54 is subject to 4-aspartylphosphate.

In terms of processing, phosphorylated by GlnK.

It localises to the cytoplasm. Its function is as follows. Member of the two-component regulatory system GlnL/GlnK that positively regulates the expression of the glsA-glnT operon in response to glutamine. GlnL binds the promoter region of glsA-glnT in vitro. This chain is Transcriptional regulatory protein GlnL (glnL), found in Bacillus subtilis (strain 168).